The following is a 453-amino-acid chain: Venom prothrombin activator notecarin-D2 (453 aa).

Positions 1–20 (MAPQLLLCLILTFLWSLPEA) are cleaved as a signal peptide. A propeptide spanning residues 21–40 (ESNVFLKSKVANRFLQRTKR) is cleaved from the precursor. One can recognise a Gla domain in the interval 41–86 (SNSLFEEIRPGNIERECIEEKCSKEEAREVFEDNEKTETFWNVYVD). Residues glutamate 46, glutamate 47, glutamate 54, glutamate 56, glutamate 59, glutamate 60, glutamate 65, glutamate 66, glutamate 69, glutamate 72, and glutamate 75 each carry the 4-carboxyglutamate modification. Residues cysteine 57 and cysteine 62 are joined by a disulfide bond. Residues 86–122 (DGDQCSSNPCHYRGTCKDGIGSYTCTCLPNYEGKNCE) form the EGF-like 1; calcium-binding domain. 11 disulfides stabilise this stretch: cysteine 90–cysteine 101, cysteine 95–cysteine 110, cysteine 112–cysteine 121, cysteine 129–cysteine 140, cysteine 136–cysteine 149, cysteine 151–cysteine 164, cysteine 172–cysteine 326, cysteine 216–cysteine 221, cysteine 236–cysteine 252, cysteine 374–cysteine 388, and cysteine 399–cysteine 427. O-linked (Hex...) serine glycosylation is present at serine 92. Positions 129–164 (CRAFNGNCWHFCKRVQSETQCSCAESYLLGVDGHSC) constitute an EGF-like 2 domain. A propeptide spans 182–209 (REASLPDFVQSQKATVLKKSDNPSPDIR) (activation peptide). The Peptidase S1 domain occupies 210–451 (IVNGMDCKLG…FIPWIKKIMS (242 aa)). The active-site Charge relay system is histidine 251. Asparagine 254 carries N-linked (GlcNAc...) asparagine glycosylation. Aspartate 306 serves as the catalytic Charge relay system. The active-site Charge relay system is the serine 403.

This sequence belongs to the peptidase S1 family. Snake venom subfamily. As to quaternary structure, heterodimer of a light chain and a heavy chain; disulfide-linked. Post-translationally, gamma-carboxyglutamate residues are formed by vitamin K dependent carboxylation. These residues are essential for the binding of calcium. As to expression, expressed by the venom gland.

It is found in the secreted. The catalysed reaction is Selective cleavage of Arg-|-Thr and then Arg-|-Ile bonds in prothrombin to form thrombin.. Functionally, snake prothrombin activator that attacks the hemostatic system of prey. This protein is functionally similar to blood coagulation factor Xa. This chain is Venom prothrombin activator notecarin-D2, found in Notechis scutatus scutatus (Mainland tiger snake).